Reading from the N-terminus, the 571-residue chain is Potassium-transporting ATPase potassium-binding subunit (571 aa).

The next 11 helical transmembrane spans lie at G5 to W25, L64 to I84, G136 to I156, I178 to I198, L254 to F274, W285 to A305, F330 to V350, F357 to V379, M421 to L441, L488 to G508, and G527 to F547.

It belongs to the KdpA family. The system is composed of three essential subunits: KdpA, KdpB and KdpC.

Its subcellular location is the cell inner membrane. In terms of biological role, part of the high-affinity ATP-driven potassium transport (or Kdp) system, which catalyzes the hydrolysis of ATP coupled with the electrogenic transport of potassium into the cytoplasm. This subunit binds the periplasmic potassium ions and delivers the ions to the membrane domain of KdpB through an intramembrane tunnel. The chain is Potassium-transporting ATPase potassium-binding subunit from Methylobacterium nodulans (strain LMG 21967 / CNCM I-2342 / ORS 2060).